Reading from the N-terminus, the 354-residue chain is uncharacterized protein (354 aa).

It belongs to the asfivirus B354L family.

This is an uncharacterized protein from Ornithodoros (relapsing fever ticks).